A 532-amino-acid polypeptide reads, in one-letter code: Cilia- and flagella-associated protein 97 (532 aa).

Serine 19 bears the Phosphoserine mark. 5 disordered regions span residues 28 to 83 (ETNS…PVEN), 116 to 263 (IPNR…TPDI), 306 to 333 (KAAKKGKEKHEPDVSSKSSSVLDSSLDH), 398 to 421 (LSRQAEKPGSKSTIPRSADHPPKL), and 485 to 532 (GQYS…TAWL). Residues 35 to 49 (KQNDDPKERIDKDTK) show a composition bias toward basic and acidic residues. Over residues 50 to 63 (NVNSNTGMQTTENY) the composition is skewed to polar residues. Basic and acidic residues predominate over residues 67 to 82 (KGNERNVKFPPEHPVE). Acidic residues predominate over residues 127 to 139 (GEDDYYTDGEESS). Residue threonine 133 is modified to Phosphothreonine. Phosphoserine occurs at positions 138 and 139. Composition is skewed to low complexity over residues 170–185 (SSSSSSSLSSSSSGSG) and 194–205 (DSHLSDSSPSSK). Position 218 is a phosphoserine (serine 218). The span at 227 to 239 (IKSTETQPSSTTP) shows a compositional bias: polar residues. Serine 248 is subject to Phosphoserine. Over residues 253 to 263 (TDVSPLSTPDI) the composition is skewed to polar residues. A compositionally biased stretch (low complexity) spans 320–329 (SSKSSSVLDS). Serine 330 bears the Phosphoserine mark. Residues 374–450 (GKNYSFTREE…ALLKRLEAVK (77 aa)) are a coiled coil. The span at 493–503 (SRTSSATSGLS) shows a compositional bias: polar residues.

The protein belongs to the CFAP97 family.

The polypeptide is Cilia- and flagella-associated protein 97 (Homo sapiens (Human)).